We begin with the raw amino-acid sequence, 390 residues long: MLKCTIKNEQIETLRSGDTFVSYEIETESDLPVFEDKKFSVRRRYKDFEMLHNILSHDYNGYAIPPLPRKYTVSSFSGGSLSPIFIARRMQSLQTFLDRCSTHPVISNSMHMYQFLENNSWKSYYHNAWMQSENTKSKGNNVSGGIESSIQNLDPYAQSLYETAKQLLQNADTDLSKLEKTCVQYMNSVQNFPTDIPVPSNLSISNLDVVSVEFKRLKRNSIFLINSFHSKVITSIQDLEDYMVVFKSLIKSREQKVKQFEHFQQIVQSNSNNPDQSSRSDPNFVEATPVVQQTPELKPSPNTTIRTSSLFSIPKFFKKKRYSLGQDDANPMELLQLSFQELCIFNEKLEQELNFLRERIDVEMRKTLQMVCDCHVEYFSGILEQHAVKE.

In terms of domain architecture, PX spans 1–123 (MLKCTIKNEQ…QFLENNSWKS (123 aa)). A 1,2-diacyl-sn-glycero-3-phospho-(1D-myo-inositol-3-phosphate)-binding residues include R44, K70, and R89.

It belongs to the sorting nexin family.

Its subcellular location is the cytoplasm. The protein resides in the membrane. The protein is Sorting nexin C1711.11 of Schizosaccharomyces pombe (strain 972 / ATCC 24843) (Fission yeast).